A 401-amino-acid polypeptide reads, in one-letter code: Probable [pyruvate dehydrogenase (acetyl-transferring)] kinase, mitochondrial (401 aa).

The Histidine kinase domain maps to 131-360 (LIELRESDGV…DACIYLKAVP (230 aa)). Residues 247 to 254 (ELFKNAMR), Asp286, 305 to 306 (ST), and 321 to 326 (GYGYGL) each bind ATP.

The protein belongs to the PDK/BCKDK protein kinase family.

The protein resides in the mitochondrion matrix. It carries out the reaction L-seryl-[pyruvate dehydrogenase E1 alpha subunit] + ATP = O-phospho-L-seryl-[pyruvate dehydrogenase E1 alpha subunit] + ADP + H(+). Its function is as follows. Inhibits the mitochondrial pyruvate dehydrogenase complex by phosphorylation of the E1 alpha subunit, thus contributing to the regulation of glucose metabolism. Required for normal lifespan. The chain is Probable [pyruvate dehydrogenase (acetyl-transferring)] kinase, mitochondrial (pdhk-2) from Caenorhabditis elegans.